The primary structure comprises 351 residues: Ion-translocating oxidoreductase complex subunit D (351 aa).

4 helical membrane-spanning segments follow: residues 18 to 38, 42 to 62, 87 to 107, and 121 to 141; these read IMLLVILACIPGIIAQTYFFG, LIQVALAIMTAVLAEGAVLHL, LPPLAPWWMIVLGTAFAIIIA, and PAMVGYVVLLISFPVQMTSWL. At Thr-185 the chain carries FMN phosphoryl threonine. Helical transmembrane passes span 212–232, 241–261, 264–284, 298–318, and 320–340; these read LAGIGWQWINLGFLAGGLLLL, IPVSFLLALAGCAAISWMIAP, FAPPMLHLFSGATMLGAFFIA, LIFGALIGILVWLIRVYGGYP, and GVAFAVLLANICVPLIDHYTQ.

Belongs to the NqrB/RnfD family. As to quaternary structure, the complex is composed of six subunits: RnfA, RnfB, RnfC, RnfD, RnfE and RnfG. Requires FMN as cofactor.

The protein localises to the cell inner membrane. Part of a membrane-bound complex that couples electron transfer with translocation of ions across the membrane. This Yersinia enterocolitica serotype O:8 / biotype 1B (strain NCTC 13174 / 8081) protein is Ion-translocating oxidoreductase complex subunit D.